Consider the following 60-residue polypeptide: Conotoxin Pu5.6 (60 aa).

The first 19 residues, 1 to 19, serve as a signal peptide directing secretion; sequence MRCVPVFVILLLLIASAAS. Positions 20–47 are excised as a propeptide; it reads IDAQQKTKDDAPLTSLNDNALQQHWNKR.

This sequence belongs to the conotoxin T superfamily. In terms of processing, contains 2 disulfide bonds that can be either 'C1-C3, C2-C4' or 'C1-C4, C2-C3', since these disulfide connectivities have been observed for conotoxins with cysteine framework V (for examples, see AC P0DQQ7 and AC P81755). In terms of tissue distribution, expressed by the venom duct.

It localises to the secreted. The polypeptide is Conotoxin Pu5.6 (Conus pulicarius (Flea-bitten cone)).